Reading from the N-terminus, the 378-residue chain is Nitronate monooxygenase (378 aa).

The propeptide occupies 1–15; that stretch reads MHFPGHSSKKEESAQ. Residue 37 to 39 coordinates FMN; the sequence is PMY. Residue histidine 196 is the Proton acceptor of the active site. Histidine 196 is a binding site for substrate. Residues 229–231 and 252–253 each bind FMN; these read AGG and GT.

This sequence belongs to the nitronate monooxygenase family. NMO class II subfamily. In terms of assembly, homodimer. It depends on FMN as a cofactor.

It catalyses the reaction ethylnitronate + O2 = chemical entity + acetaldehyde + nitrite + H(+). Its function is as follows. Catalyzes the oxidation of alkyl nitronates to produce the corresponding carbonyl compounds and nitrites. Anionic forms of nitroalkanes are much better substrates than are neutral forms. This chain is Nitronate monooxygenase (ncd-2), found in Neurospora crassa (strain ATCC 24698 / 74-OR23-1A / CBS 708.71 / DSM 1257 / FGSC 987).